The following is a 196-amino-acid chain: MCLLIKKLYLTFARSTSIIITLVIIDQLSKWWFIDNLRWTPGLMLKVTSFLNMVYTWNYGISFGLMREYYQYSNAIFLITNTLIVCYLYYLMIRSNTIGSFAGYSFVIGGAVGNLIDRCFRGAVFDFIHFHYHNYSFPVFNLADCFITIGVIILIEDYDNTKKVIEEKIKGNYDNAQIEAMAEKIRNTDQGGNDKV.

3 consecutive transmembrane segments (helical) span residues Ser17–Leu37, Ser73–Ile93, and Asn96–Ile116. Residues Asp126 and Asp144 contribute to the active site. A helical membrane pass occupies residues Tyr135–Ile155.

Belongs to the peptidase A8 family.

The protein resides in the cell inner membrane. It carries out the reaction Release of signal peptides from bacterial membrane prolipoproteins. Hydrolyzes -Xaa-Yaa-Zaa-|-(S,diacylglyceryl)Cys-, in which Xaa is hydrophobic (preferably Leu), and Yaa (Ala or Ser) and Zaa (Gly or Ala) have small, neutral side chains.. It participates in protein modification; lipoprotein biosynthesis (signal peptide cleavage). Functionally, this protein specifically catalyzes the removal of signal peptides from prolipoproteins. The chain is Lipoprotein signal peptidase from Rickettsia akari (strain Hartford).